Reading from the N-terminus, the 204-residue chain is Pyridoxal 5'-phosphate synthase subunit PdxT (204 aa).

An L-glutamine-binding site is contributed by Gly-52–Ser-54. Catalysis depends on Cys-84, which acts as the Nucleophile. L-glutamine is bound by residues Arg-116 and Ile-143–Arg-144. Catalysis depends on charge relay system residues His-184 and Glu-186.

This sequence belongs to the glutaminase PdxT/SNO family. In the presence of PdxS, forms a dodecamer of heterodimers. Only shows activity in the heterodimer.

The enzyme catalyses aldehydo-D-ribose 5-phosphate + D-glyceraldehyde 3-phosphate + L-glutamine = pyridoxal 5'-phosphate + L-glutamate + phosphate + 3 H2O + H(+). It catalyses the reaction L-glutamine + H2O = L-glutamate + NH4(+). It functions in the pathway cofactor biosynthesis; pyridoxal 5'-phosphate biosynthesis. Its function is as follows. Catalyzes the hydrolysis of glutamine to glutamate and ammonia as part of the biosynthesis of pyridoxal 5'-phosphate. The resulting ammonia molecule is channeled to the active site of PdxS. The sequence is that of Pyridoxal 5'-phosphate synthase subunit PdxT from Pyrobaculum arsenaticum (strain DSM 13514 / JCM 11321 / PZ6).